The following is a 262-amino-acid chain: High-affinity zinc uptake system membrane protein ZnuB (262 aa).

7 helical membrane passes run 8-28 (GWLAGVLLSLTTGPLGSFIVW), 54-74 (INSFYAILILMSFIAIILAWL), 84-104 (TVLNIISHSSLSLGMVFISLI), 129-149 (ITISISSILILSILLFRWHSI), 179-199 (FTIAIAIKFVGALLITSLLII), 215-235 (VIIAIIVSILSVTGGISLSVF), and 238-254 (TPASPSIVLCSSFLCLI).

The protein belongs to the ABC-3 integral membrane protein family.

Its subcellular location is the cell membrane. In terms of biological role, involved in the high-affinity zinc uptake transport system. In Buchnera aphidicola subsp. Acyrthosiphon pisum (strain APS) (Acyrthosiphon pisum symbiotic bacterium), this protein is High-affinity zinc uptake system membrane protein ZnuB (znuB).